A 190-amino-acid polypeptide reads, in one-letter code: Imidazoleglycerol-phosphate dehydratase (190 aa).

It belongs to the imidazoleglycerol-phosphate dehydratase family.

It is found in the cytoplasm. It catalyses the reaction D-erythro-1-(imidazol-4-yl)glycerol 3-phosphate = 3-(imidazol-4-yl)-2-oxopropyl phosphate + H2O. Its pathway is amino-acid biosynthesis; L-histidine biosynthesis; L-histidine from 5-phospho-alpha-D-ribose 1-diphosphate: step 6/9. In Nitratiruptor sp. (strain SB155-2), this protein is Imidazoleglycerol-phosphate dehydratase.